The chain runs to 479 residues: Long-chain alcohol oxidase (479 aa).

An FAD-binding PCMH-type domain is found at 14-183; the sequence is QILRPSAAYT…LAVRIRCREQ (170 aa). Position 49 is a pros-8alpha-FAD histidine (histidine 49). Residues threonine 113, glycine 116, 120–123, and isoleucine 173 contribute to the FAD site; that span reads TGTH. Residues 241–258 form a helical membrane-spanning segment; that stretch reads LYWLGTMDYGLILQILFL. Residues arginine 369 and histidine 425 each coordinate FAD.

It belongs to the oxygen-dependent FAD-linked oxidoreductase family. FAD is required as a cofactor.

It localises to the cell membrane. The catalysed reaction is a long-chain primary fatty alcohol + O2 = a long-chain fatty aldehyde + H2O2. It catalyses the reaction dodecan-1-ol + O2 = dodecanal + H2O2. The enzyme catalyses tetradecan-1-ol + O2 = tetradecanal + H2O2. It carries out the reaction octan-1-ol + O2 = octanal + H2O2. The catalysed reaction is decan-1-ol + O2 = decanal + H2O2. It functions in the pathway lipid metabolism; fatty acid metabolism. Functionally, in vitro catalyzes the oxidation of a range of fatty alcohols having a carbon chain length of six and above, with a reduction of O2 to H2O2. Shows the highest activity with 1-dodecanol. Is likely involved in lipid metabolism. This Uncultured marine euryarchaeote protein is Long-chain alcohol oxidase.